Here is a 399-residue protein sequence, read N- to C-terminus: Phosphoglycerate kinase (399 aa).

Residues Asp22–Asn24, Arg38, His61–Arg64, Arg120, and Arg153 each bind substrate. ATP-binding positions include Lys204, Glu326, and Gly353–Thr356.

This sequence belongs to the phosphoglycerate kinase family. In terms of assembly, monomer.

Its subcellular location is the cytoplasm. The catalysed reaction is (2R)-3-phosphoglycerate + ATP = (2R)-3-phospho-glyceroyl phosphate + ADP. Its pathway is carbohydrate degradation; glycolysis; pyruvate from D-glyceraldehyde 3-phosphate: step 2/5. The chain is Phosphoglycerate kinase from Geotalea daltonii (strain DSM 22248 / JCM 15807 / FRC-32) (Geobacter daltonii).